Consider the following 328-residue polypeptide: DNA-directed RNA polymerase subunit alpha (328 aa).

Residues 1–232 form an alpha N-terminal domain (alpha-NTD) region; that stretch reads MSTQGFLKPR…DQISVFAALE (232 aa). The segment at 248 to 328 is alpha C-terminal domain (alpha-CTD); it reads IDPVLLRPVD…NWPPLGLERP (81 aa).

It belongs to the RNA polymerase alpha chain family. In terms of assembly, homodimer. The RNAP catalytic core consists of 2 alpha, 1 beta, 1 beta' and 1 omega subunit. When a sigma factor is associated with the core the holoenzyme is formed, which can initiate transcription.

The catalysed reaction is RNA(n) + a ribonucleoside 5'-triphosphate = RNA(n+1) + diphosphate. In terms of biological role, DNA-dependent RNA polymerase catalyzes the transcription of DNA into RNA using the four ribonucleoside triphosphates as substrates. In Bordetella petrii (strain ATCC BAA-461 / DSM 12804 / CCUG 43448), this protein is DNA-directed RNA polymerase subunit alpha.